Reading from the N-terminus, the 364-residue chain is Probable dual-specificity RNA methyltransferase RlmN (364 aa).

The active-site Proton acceptor is the Glu-106. One can recognise a Radical SAM core domain in the interval 112–351 (YPHRNTVCIS…CTVRDTRGRE (240 aa)). Cysteines 119 and 356 form a disulfide. The [4Fe-4S] cluster site is built by Cys-126, Cys-130, and Cys-133. S-adenosyl-L-methionine contacts are provided by residues 177 to 178 (GE), Ser-211, 234 to 236 (SLH), and Asn-313. The active-site S-methylcysteine intermediate is the Cys-356.

This sequence belongs to the radical SAM superfamily. RlmN family. The cofactor is [4Fe-4S] cluster.

The protein resides in the cytoplasm. The enzyme catalyses adenosine(2503) in 23S rRNA + 2 reduced [2Fe-2S]-[ferredoxin] + 2 S-adenosyl-L-methionine = 2-methyladenosine(2503) in 23S rRNA + 5'-deoxyadenosine + L-methionine + 2 oxidized [2Fe-2S]-[ferredoxin] + S-adenosyl-L-homocysteine. The catalysed reaction is adenosine(37) in tRNA + 2 reduced [2Fe-2S]-[ferredoxin] + 2 S-adenosyl-L-methionine = 2-methyladenosine(37) in tRNA + 5'-deoxyadenosine + L-methionine + 2 oxidized [2Fe-2S]-[ferredoxin] + S-adenosyl-L-homocysteine. Specifically methylates position 2 of adenine 2503 in 23S rRNA and position 2 of adenine 37 in tRNAs. This chain is Probable dual-specificity RNA methyltransferase RlmN, found in Mycolicibacterium paratuberculosis (strain ATCC BAA-968 / K-10) (Mycobacterium paratuberculosis).